The primary structure comprises 78 residues: Large ribosomal subunit protein bL28 (78 aa).

Residues 1–20 are disordered; that stretch reads MSRVCQVTGKGPVTGNNISH.

It belongs to the bacterial ribosomal protein bL28 family.

In Pseudomonas putida (strain ATCC 700007 / DSM 6899 / JCM 31910 / BCRC 17059 / LMG 24140 / F1), this protein is Large ribosomal subunit protein bL28.